A 519-amino-acid polypeptide reads, in one-letter code: Cytosol aminopeptidase (519 aa).

S42 bears the Phosphoserine mark. K45 carries the N6-succinyllysine modification. S54 carries the phosphoserine modification. Residues K61 and K103 each carry the N6-succinyllysine modification. A phosphoserine mark is found at S180 and S194. Positions 202 and 203 each coordinate Zn(2+). The residue at position 221 (K221) is an N6-acetyllysine; alternate. Residue K221 is modified to N6-succinyllysine; alternate. S238 carries the post-translational modification Phosphoserine. Zn(2+) contacts are provided by K282 and D287. The substrate site is built by K282, D287, S292, and K294. D287 contacts Mg(2+). The active site involves K294. Zn(2+) is bound by residues R303, D305, D364, and E366. D305 and D364 together coordinate substrate. The Mg(2+) site is built by D364 and E366. The active site involves R368. K455 carries the N6-acetyllysine; alternate modification. K455 carries the post-translational modification N6-succinyllysine; alternate. N6-succinyllysine is present on K476. K489 bears the N6-acetyllysine; alternate mark. Position 489 is an N6-succinyllysine; alternate (K489).

This sequence belongs to the peptidase M17 family. Homohexamer. Zn(2+) serves as cofactor. The cofactor is Mn(2+).

The protein resides in the cytoplasm. It catalyses the reaction Release of an N-terminal amino acid, Xaa-|-Yaa-, in which Xaa is preferably Leu, but may be other amino acids including Pro although not Arg or Lys, and Yaa may be Pro. Amino acid amides and methyl esters are also readily hydrolyzed, but rates on arylamides are exceedingly low.. The enzyme catalyses an S-substituted L-cysteinylglycine + H2O = an S-substituted L-cysteine + glycine. The catalysed reaction is L-cysteinylglycine + H2O = L-cysteine + glycine. It carries out the reaction S-benzyl-L-cysteinylglycine + H2O = S-benzyl-L-cysteine + glycine. It catalyses the reaction Release of N-terminal proline from a peptide.. Its activity is regulated as follows. Bimane-S-cysteinylglycine-hydrolyzing activity is inhibited by o-phenanthroline or bestatin, and is activated by the addition of zinc chloride. Its function is as follows. Cytosolic metallopeptidase that catalyzes the removal of unsubstituted N-terminal hydrophobic amino acids from various peptides. The presence of Zn(2+) ions is essential for the peptidase activity, and the association with other cofactors can modulate the substrate spectificity of the enzyme. For instance, in the presence of Mn(2+), it displays a specific Cys-Gly hydrolyzing activity of Cys-Gly-S-conjugates. Involved in the metabolism of glutathione and in the degradation of glutathione S-conjugates, which may play a role in the control of the cell redox status. This Rattus norvegicus (Rat) protein is Cytosol aminopeptidase.